The sequence spans 395 residues: MFPVSSIGNDISSDLVRRKMNDLPESPTGNNLEALAPGIEKLKQTSIEMVTLLNTLQPGGKCIITGDFQKELAYLQNVILYNVSSLRLDFLGYNAQIIQRSDNTCELTINEPLKNQEISTGNININCPLKDIYNEIRRLNVIFSCGTGDIVDLSSLDLRNVDLDYYDFTDKHMANTILNPFKLNSTNFTNANMFQVNFVSSTQNATISWDYLLKITPVLISISDMYSEEKIKFVESCLNEPGDITEEQLKIMRFAIIKSIPRATLTDKLENELTKEIYKSSSKIINCLNRIKLTEMKEFSSEKIYDYIDIIIEDYENTKENAYLVVPQINYTMDLNIEDSSSEELLSDNTLEKDENSPDNGFEVGEYNTYEAYNSEKQYFTREDYTYDYDLLNAI.

This is an uncharacterized protein from Escherichia coli (strain K12).